A 586-amino-acid polypeptide reads, in one-letter code: Alpha-1,2-mannosyltransferase MNN5 (586 aa).

The N-terminal stretch at 1 to 29 (MLIRLKKRKILQVIVSAVVLILFFCSVHN) is a signal peptide. Asparagine 113, asparagine 136, asparagine 259, and asparagine 264 each carry an N-linked (GlcNAc...) asparagine glycan.

Belongs to the MNN1/MNT family. Interacts with SVP26. Glycosylated.

The protein localises to the golgi apparatus. It localises to the cis-Golgi network. The protein operates within protein modification; protein glycosylation. Responsible for addition of first and second mannose residues to the outer chain of core N-linked polysaccharides and to O-linked mannotriose. Implicated in late Golgi modifications. In Saccharomyces cerevisiae (strain ATCC 204508 / S288c) (Baker's yeast), this protein is Alpha-1,2-mannosyltransferase MNN5 (MNN5).